A 338-amino-acid chain; its full sequence is Heat-inducible transcription repressor HrcA (338 aa).

It belongs to the HrcA family.

Functionally, negative regulator of class I heat shock genes (grpE-dnaK-dnaJ and groELS operons). Prevents heat-shock induction of these operons. The polypeptide is Heat-inducible transcription repressor HrcA (Bacillus cereus (strain 03BB102)).